A 374-amino-acid chain; its full sequence is Dihydroorotate dehydrogenase (quinone) (374 aa).

FMN-binding positions include 78–82 (AGFDK) and Thr102. Lys82 is a binding site for substrate. Position 127–131 (127–131 (NRMGF)) interacts with substrate. The FMN site is built by Asn159 and Asn192. Substrate is bound at residue Asn192. The Nucleophile role is filled by Ser195. Asn197 provides a ligand contact to substrate. The FMN site is built by Lys230 and Thr258. 259–260 (NT) contacts substrate. Residues Gly287, Gly316, and 337-338 (YT) contribute to the FMN site.

Belongs to the dihydroorotate dehydrogenase family. Type 2 subfamily. In terms of assembly, monomer. FMN is required as a cofactor.

It is found in the cell membrane. The enzyme catalyses (S)-dihydroorotate + a quinone = orotate + a quinol. The protein operates within pyrimidine metabolism; UMP biosynthesis via de novo pathway; orotate from (S)-dihydroorotate (quinone route): step 1/1. Catalyzes the conversion of dihydroorotate to orotate with quinone as electron acceptor. This chain is Dihydroorotate dehydrogenase (quinone), found in Acaryochloris marina (strain MBIC 11017).